The sequence spans 199 residues: GTP-binding protein Di-Ras2 (199 aa).

Residues 14 to 21, 33 to 39, 61 to 65, and 121 to 124 contribute to the GTP site; these read GAGGVGKS, RESYIPT, DTTGS, and NKCD. S35 is subject to Phosphoserine. An Effector region motif is present at residues 36 to 44; it reads YIPTVEDTY. Phosphoserine is present on S126. 152–153 contacts GTP; the sequence is AK. At C196 the chain carries Cysteine methyl ester. The S-geranylgeranyl cysteine moiety is linked to residue C196. Positions 197-199 are cleaved as a propeptide — removed in mature form; it reads VVM.

Belongs to the small GTPase superfamily. Di-Ras family. Post-translationally, ubiquitinated by the ECS(ASB11) complex via 'Lys-11'-linked ubiquitin chains, leading to its degradation by the proteasome.

It is found in the cell membrane. It catalyses the reaction GTP + H2O = GDP + phosphate + H(+). In terms of biological role, displays low GTPase activity and exists predominantly in the GTP-bound form. The protein is GTP-binding protein Di-Ras2 (Diras2) of Mus musculus (Mouse).